The sequence spans 211 residues: ATP phosphoribosyltransferase (211 aa).

Belongs to the ATP phosphoribosyltransferase family. Short subfamily. Heteromultimer composed of HisG and HisZ subunits.

The protein resides in the cytoplasm. The catalysed reaction is 1-(5-phospho-beta-D-ribosyl)-ATP + diphosphate = 5-phospho-alpha-D-ribose 1-diphosphate + ATP. It participates in amino-acid biosynthesis; L-histidine biosynthesis; L-histidine from 5-phospho-alpha-D-ribose 1-diphosphate: step 1/9. Its function is as follows. Catalyzes the condensation of ATP and 5-phosphoribose 1-diphosphate to form N'-(5'-phosphoribosyl)-ATP (PR-ATP). Has a crucial role in the pathway because the rate of histidine biosynthesis seems to be controlled primarily by regulation of HisG enzymatic activity. The sequence is that of ATP phosphoribosyltransferase from Pseudomonas fluorescens (strain Pf0-1).